The sequence spans 484 residues: Glutamate--tRNA ligase (484 aa).

The 'HIGH' region signature appears at 11 to 21 (PSPTGYLHIGN). The short motif at 252 to 256 (KLSKR) is the 'KMSKS' region element. ATP is bound at residue Lys255.

It belongs to the class-I aminoacyl-tRNA synthetase family. Glutamate--tRNA ligase type 1 subfamily. In terms of assembly, monomer.

It is found in the cytoplasm. It catalyses the reaction tRNA(Glu) + L-glutamate + ATP = L-glutamyl-tRNA(Glu) + AMP + diphosphate. Catalyzes the attachment of glutamate to tRNA(Glu) in a two-step reaction: glutamate is first activated by ATP to form Glu-AMP and then transferred to the acceptor end of tRNA(Glu). The sequence is that of Glutamate--tRNA ligase from Staphylococcus aureus (strain COL).